The sequence spans 265 residues: Hydroxyethylthiazole kinase (265 aa).

Methionine 43 provides a ligand contact to substrate. Residues arginine 119 and serine 165 each contribute to the ATP site. Residue alanine 192 participates in substrate binding.

This sequence belongs to the Thz kinase family. Mg(2+) is required as a cofactor.

It carries out the reaction 5-(2-hydroxyethyl)-4-methylthiazole + ATP = 4-methyl-5-(2-phosphooxyethyl)-thiazole + ADP + H(+). Its pathway is cofactor biosynthesis; thiamine diphosphate biosynthesis; 4-methyl-5-(2-phosphoethyl)-thiazole from 5-(2-hydroxyethyl)-4-methylthiazole: step 1/1. Functionally, catalyzes the phosphorylation of the hydroxyl group of 4-methyl-5-beta-hydroxyethylthiazole (THZ). The sequence is that of Hydroxyethylthiazole kinase from Haemophilus influenzae (strain ATCC 51907 / DSM 11121 / KW20 / Rd).